The sequence spans 105 residues: Large ribosomal subunit protein uL24 (105 aa).

It belongs to the universal ribosomal protein uL24 family. Part of the 50S ribosomal subunit.

In terms of biological role, one of two assembly initiator proteins, it binds directly to the 5'-end of the 23S rRNA, where it nucleates assembly of the 50S subunit. Its function is as follows. One of the proteins that surrounds the polypeptide exit tunnel on the outside of the subunit. The sequence is that of Large ribosomal subunit protein uL24 from Staphylococcus haemolyticus (strain JCSC1435).